Reading from the N-terminus, the 77-residue chain is SS18-like protein 2 (77 aa).

The short motif at 50-53 (YQHV) is the SH2-binding element.

It belongs to the SS18 family.

This chain is SS18-like protein 2 (SS18L2), found in Homo sapiens (Human).